An 89-amino-acid polypeptide reads, in one-letter code: Envelope protein US9 (89 aa).

The segment covering Met1–Ser10 has biased composition (basic and acidic residues). The interval Met1–Pro21 is disordered. The Intravirion segment spans residues Met1 to Leu66. Residues Tyr20 to Ala23 carry the Internalization motif motif. The segment at Glu29–Glu38 is acidic. A phosphoserine; by host CK2 mark is found at Ser33 and Ser35. The chain crosses the membrane as a helical; Signal-anchor for type II membrane protein span at residues Val67–Leu87. The Virion surface portion of the chain corresponds to Leu88–Arg89.

The protein belongs to the alphaherpesvirinae envelope protein US9 family. Phosphorylated on serines within the acidic cluster, possibly by host CK2. Phosphorylation determines whether endocytosed viral US9 traffics to the trans-Golgi network or recycles to the cell membrane.

Its subcellular location is the virion membrane. The protein resides in the host Golgi apparatus membrane. The protein localises to the host smooth endoplasmic reticulum membrane. It is found in the host cell membrane. Essential for the anterograde spread of the infection throughout the host nervous system. Together with the gE/gI heterodimer, US9 is involved in the sorting and transport of viral structural components toward axon tips. This chain is Envelope protein US9, found in Homo sapiens (Human).